A 614-amino-acid chain; its full sequence is MKSIILSCFVISAAASQSYLPTEQIDVQSSLLSDPNHVAGKTVDYMIAGGGLTGLTIAAKLTENPNINVLVIENGFYESSEGEIIEDLNDYGDIFGTTVDHAYEIVSQAINNRTENIRSGNGLGGSTLTNGGSWTRPHKAQIDSWEKVFGNKDWNWDNLFPYMQKAEIARPPNDVEIAAGHFYNSSCHGTNGTVHAGPRNNGEPYSPIIETLMDSAKERGVPTQLDFHCGVPRGISMIPNALHEDQVRSDAAREWLLPNYKRPNLQVLTGQFVGKVLINQTATSGAIPGYKAVGVNFGTNKNVNSNVYAKHEVLLASGSAVSPRILEYSGIGLKSVLDAAGIQQIVDLPVGLNMQDQTTTTVGSRTKPSGNGQGQAIYFATFNETFGDYAPPAHELLNTKLHQWATETVARGGFHNVTALEIQYENYRDWLVNEEVAYTELFLDTSGKINFDLWDLIPFTRGSVHIQGNDPYLRRFSYDPKFFMNELDLLGQAAGSKLAREISNTGGMQTYFDGETTPGSNLAYNADLDQWVDYVKQNFRANWHAVGTCSMMAEELGGVVDSAARVYGVEGLRVVDGSIPPTQVSSHVMTVFYAMSLKISDAILADFHAKSSKH.

Positions 1–15 are cleaved as a signal peptide; sequence MKSIILSCFVISAAA. 3 residues coordinate FAD: L52, T53, and E73. The N-linked (GlcNAc...) asparagine glycan is linked to N112. The disordered stretch occupies residues 117–136; it reads IRSGNGLGGSTLTNGGSWTR. Positions 126, 130, 131, and 133 each coordinate FAD. 2 N-linked (GlcNAc...) asparagine glycosylation sites follow: N184 and N191. C187 and C229 are oxidised to a cystine. V273 is an FAD binding site. N-linked (GlcNAc...) asparagine glycosylation is found at N279, N383, and N416. H544 acts as the Proton acceptor in catalysis. 2 residues coordinate O2: R565 and V566. Residues G577 and M589 each coordinate FAD.

This sequence belongs to the GMC oxidoreductase family. In terms of assembly, homodimer. Requires FAD as cofactor.

The protein resides in the secreted. Its subcellular location is the cell wall. The protein localises to the cytoplasm. It localises to the extracellular space. It is found in the extracellular matrix. It carries out the reaction beta-D-glucose + O2 = D-glucono-1,5-lactone + H2O2. Glucose oxidase catalyzes the oxidation of beta-D-glucose to D-glucono-delta-lactone and hydrogen peroxide in the presence of molecular oxygen. The protein is Glucose oxidase 1 of Penicillium expansum (Blue mold rot fungus).